Here is a 389-residue protein sequence, read N- to C-terminus: Chalcone synthase 1 (389 aa).

Cysteine 164 is a catalytic residue.

This sequence belongs to the thiolase-like superfamily. Chalcone/stilbene synthases family.

It catalyses the reaction (E)-4-coumaroyl-CoA + 3 malonyl-CoA + 3 H(+) = 2',4,4',6'-tetrahydroxychalcone + 3 CO2 + 4 CoA. It functions in the pathway secondary metabolite biosynthesis; flavonoid biosynthesis. The primary product of this enzyme is 4,2',4',6'-tetrahydroxychalcone (also termed naringenin-chalcone or chalcone) which can under specific conditions spontaneously isomerize into naringenin. The chain is Chalcone synthase 1 (CHS1) from Pisum sativum (Garden pea).